A 295-amino-acid polypeptide reads, in one-letter code: MTVTGRFAPSPTGAMHLGNARTALLAWLHSRALGGRHLLRFEDLDTGRVRGWAYDLTRRDLEWLGLDWDEEFRQSERLDLYAAALAGLDTYPCTCTRKEVLAAIADSAGAPHGEEAVYPGTCRPGSVHPERPAARRWRVPEAESCVTDALSGDTLCQWLPRDVGDFVLQRNDGVYAYHLAVVVDDALMGVTDVLRGADLWTASPRQAALHRALGFTPPRFLHVPLLSNYRGERLAKRGGAPPLSEWREHGEAPGRVLADLAHTLPWPGFQAVPEEVTAPELLPLWGDVLAERPGT.

Residues 6–10 and Glu-42 each bind L-glutamate; that span reads RFAPS. The short motif at 9–19 is the 'HIGH' region element; it reads PSPTGAMHLGN. Positions 93, 95, 118, and 122 each coordinate Zn(2+). Positions 177 and 195 each coordinate L-glutamate. The 'KMSKS' region motif lies at 233-237; it reads RLAKR. Lys-236 is a binding site for ATP.

It belongs to the class-I aminoacyl-tRNA synthetase family. GluQ subfamily. It depends on Zn(2+) as a cofactor.

Functionally, catalyzes the tRNA-independent activation of glutamate in presence of ATP and the subsequent transfer of glutamate onto a tRNA(Asp). Glutamate is transferred on the 2-amino-5-(4,5-dihydroxy-2-cyclopenten-1-yl) moiety of the queuosine in the wobble position of the QUC anticodon. The protein is Glutamyl-Q tRNA(Asp) synthetase of Deinococcus radiodurans (strain ATCC 13939 / DSM 20539 / JCM 16871 / CCUG 27074 / LMG 4051 / NBRC 15346 / NCIMB 9279 / VKM B-1422 / R1).